Consider the following 134-residue polypeptide: Small ribosomal subunit protein uS8 (134 aa).

The protein belongs to the universal ribosomal protein uS8 family. In terms of assembly, part of the 30S ribosomal subunit. Contacts proteins S5 and S12.

One of the primary rRNA binding proteins, it binds directly to 16S rRNA central domain where it helps coordinate assembly of the platform of the 30S subunit. The chain is Small ribosomal subunit protein uS8 from Thermosipho africanus (strain TCF52B).